The primary structure comprises 572 residues: Oxygen-dependent choline dehydrogenase (572 aa).

9-38 contacts FAD; that stretch reads DYVIIGGGSAGSVLGARLSEDKDKNVLVLE. Catalysis depends on H477, which acts as the Proton acceptor.

This sequence belongs to the GMC oxidoreductase family. The cofactor is FAD.

It catalyses the reaction choline + A = betaine aldehyde + AH2. The catalysed reaction is betaine aldehyde + NAD(+) + H2O = glycine betaine + NADH + 2 H(+). It functions in the pathway amine and polyamine biosynthesis; betaine biosynthesis via choline pathway; betaine aldehyde from choline (cytochrome c reductase route): step 1/1. Involved in the biosynthesis of the osmoprotectant glycine betaine. Catalyzes the oxidation of choline to betaine aldehyde and betaine aldehyde to glycine betaine at the same rate. This chain is Oxygen-dependent choline dehydrogenase, found in Staphylococcus epidermidis (strain ATCC 35984 / DSM 28319 / BCRC 17069 / CCUG 31568 / BM 3577 / RP62A).